Reading from the N-terminus, the 69-residue chain is Brevinin-1CG1 (69 aa).

The first 22 residues, 1-22 (MFTMKKSLLLLFFLGTINLSLC), serve as a signal peptide directing secretion. Positions 23 to 43 (EQERNAEEERRDDDEMDVEVE) are cleaved as a propeptide — removed in mature form. Cysteine 63 and cysteine 69 are joined by a disulfide.

In terms of tissue distribution, expressed by the skin glands.

It is found in the secreted. Antimicrobial peptide. Active against Gram-positive bacteria R.rhodochrous X15 and B.licheniformis X39 and against Gram-negative bacterium E.coli ATCC 25922. Has antifungal activity against a slime mold isolate. Has weak hemolytic activity against human erythrocytes. The polypeptide is Brevinin-1CG1 (Amolops chunganensis (Chungan torrent frog)).